We begin with the raw amino-acid sequence, 722 residues long: Probable carboxypeptidase X1 (722 aa).

The N-terminal stretch at 1–20 is a signal peptide; that stretch reads MWGLLLAVTAFAPSVGLGLG. A disordered region spans residues 30–54; that stretch reads APGSTLAPHSSVAQPSTKANETSER. Residues 36 to 49 show a composition bias toward polar residues; sequence APHSSVAQPSTKAN. Residues Asn-49, Asn-200, Asn-210, and Asn-307 are each glycosylated (N-linked (GlcNAc...) asparagine). Residues 103-263 form the F5/8 type C domain; the sequence is PGCPPLGLES…PCLRAEILAC (161 aa). An intrachain disulfide couples Cys-105 to Cys-263. Positions 287–610 constitute a Peptidase M14 domain; the sequence is RHHNYKAMRK…DALLTYLEQV (324 aa). Zn(2+) is bound by residues His-349 and Glu-352. Residue Asn-461 is glycosylated (N-linked (GlcNAc...) asparagine). His-487 serves as a coordination point for Zn(2+). Glu-580 functions as the Proton donor/acceptor in the catalytic mechanism.

It belongs to the peptidase M14 family. Requires Zn(2+) as cofactor. In terms of tissue distribution, strongly expressed in testis and spleen. Moderately expressed in salivary gland, brain, heart, lung, and kidney. Extremely low expression in liver and muscle. No expression in eye, adrenal, and white adipose tissues.

Its subcellular location is the secreted. Its function is as follows. May be involved in cell-cell interactions. No carboxypeptidase activity was found yet. The chain is Probable carboxypeptidase X1 (Cpxm1) from Mus musculus (Mouse).